We begin with the raw amino-acid sequence, 302 residues long: Acetylesterase (302 aa).

The first 21 residues, 1–21 (MGRFLTTTALALLATGGAATA), serve as a signal peptide directing secretion. 2 N-linked (GlcNAc...) asparagine glycosylation sites follow: Asn84 and Asn101.

It belongs to the carbohydrate esterase CE16 family.

Its subcellular location is the secreted. The catalysed reaction is an acetyl ester + H2O = an aliphatic alcohol + acetate + H(+). In terms of biological role, acetyl esterase that acts as an exo-deacetylase. Liberates acetic acid from xylo-oligomers. In Thermothelomyces thermophilus (Myceliophthora thermophila), this protein is Acetylesterase.